A 373-amino-acid polypeptide reads, in one-letter code: 3-isopropylmalate dehydrogenase AMT6 (373 aa).

An NADP(+)-binding site is contributed by 77 to 79; sequence VGG. The substrate site is built by arginine 97 and arginine 136. Mg(2+) contacts are provided by aspartate 227, aspartate 252, and aspartate 256. 284–289 provides a ligand contact to NADP(+); the sequence is SRIRGL.

This sequence belongs to the isocitrate and isopropylmalate dehydrogenases family. As to quaternary structure, homodimer. It depends on Mg(2+) as a cofactor. Mn(2+) is required as a cofactor.

It catalyses the reaction (2R,3S)-3-isopropylmalate + NAD(+) = 4-methyl-2-oxopentanoate + CO2 + NADH. It functions in the pathway amino-acid biosynthesis; L-leucine biosynthesis; L-leucine from 3-methyl-2-oxobutanoate: step 3/4. It participates in mycotoxin biosynthesis. Functionally, 3-isopropylmalate dehydrogenase; part of the gene clusters that mediate the biosynthesis of AM-toxins, host-selective toxins (HSTs) causing Alternaria blotch on apple, a worldwide distributed disease. AM-toxins are cyclic depsipeptides containing the 3 residues 2-hydroxy-isovaleric acid (2-HIV), dehydroalanine, L-alanine which are common for all 3 AM-toxins I to III. The fourth precursor is L-alpha-amino-methoxyphenyl-valeric acid (L-Amv) for AM-toxin I, L-alpha-amino-phenyl-valeric acid (L-Apv) for AM-toxin II, and L-alpha-amino-hydroxyphenyl-valeric acid (L-Ahv) for AM-toxin III. AM-toxins have two target sites for affecting susceptible apple cells; they cause invagination of the plasma membrane and electrolyte loss and chloroplast disorganization. The non-ribosomal peptide synthetase AMT1 contains 4 catalytic modules and is responsible for activation of each residue in AM-toxin. The aldo-keto reductase AMT2 catalyzes the conversion of 2-keto-isovaleric acid (2-KIV) to 2-hydroxy-isovaleric acid (2-HIV), one of the precursor residues incorporated by AMT1 during AM-toxin biosynthesis, by reduction of its ketone to an alcohol. The cytochrome P450 monooxygenase AMT3 and the thioesterase AMT4 are also important for AM-toxin production, but their exact function within the AM-toxin biosynthesis are not known yet. Up to 21 proteins (including AMT1 to AMT4) are predicted to be involved in AM-toxin biosynthesis since their expression ishighly up-regulated in AM-toxin-producing cultures. The sequence is that of 3-isopropylmalate dehydrogenase AMT6 from Alternaria alternata (Alternaria rot fungus).